The chain runs to 143 residues: Lutropin subunit beta (143 aa).

The signal sequence occupies residues 1-22 (MEMLQGLLLLWLLLLNVGGVWT). Cystine bridges form between Cys-31/Cys-79, Cys-45/Cys-94, Cys-48/Cys-132, Cys-56/Cys-110, Cys-60/Cys-112, and Cys-115/Cys-122. Asn-35 carries an N-linked (GlcNAc...) asparagine glycan.

The protein belongs to the glycoprotein hormones subunit beta family. In terms of assembly, heterodimer of a common alpha chain and a unique beta chain which confers biological specificity to thyrotropin, lutropin, follitropin and gonadotropin.

The protein resides in the secreted. Functionally, promotes spermatogenesis and ovulation by stimulating the testes and ovaries to synthesize steroids. This Felis catus (Cat) protein is Lutropin subunit beta (LHB).